A 489-amino-acid polypeptide reads, in one-letter code: Glutamate--tRNA ligase (489 aa).

Residues 12-22 (PSPTGIPHVGM) carry the 'HIGH' region motif. The 'KMSKS' region motif lies at 256-260 (KLSKR). Lys259 lines the ATP pocket.

Belongs to the class-I aminoacyl-tRNA synthetase family. Glutamate--tRNA ligase type 1 subfamily. In terms of assembly, monomer.

The protein resides in the cytoplasm. The catalysed reaction is tRNA(Glu) + L-glutamate + ATP = L-glutamyl-tRNA(Glu) + AMP + diphosphate. In terms of biological role, catalyzes the attachment of glutamate to tRNA(Glu) in a two-step reaction: glutamate is first activated by ATP to form Glu-AMP and then transferred to the acceptor end of tRNA(Glu). The protein is Glutamate--tRNA ligase of Mycobacterium marinum (strain ATCC BAA-535 / M).